Consider the following 388-residue polypeptide: Putative 8-amino-7-oxononanoate synthase (388 aa).

Arg22 contributes to the substrate binding site. 109-110 serves as a coordination point for pyridoxal 5'-phosphate; that stretch reads GY. His134 is a binding site for substrate. Pyridoxal 5'-phosphate-binding positions include Ser182, 207 to 210, and 237 to 240; these read DEAH and TLSK. Lys240 carries the post-translational modification N6-(pyridoxal phosphate)lysine. Residue Thr354 participates in substrate binding.

It belongs to the class-II pyridoxal-phosphate-dependent aminotransferase family. BioF subfamily. In terms of assembly, homodimer. Pyridoxal 5'-phosphate serves as cofactor.

It carries out the reaction 6-carboxyhexanoyl-[ACP] + L-alanine + H(+) = (8S)-8-amino-7-oxononanoate + holo-[ACP] + CO2. It participates in cofactor biosynthesis; biotin biosynthesis. Catalyzes the decarboxylative condensation of pimeloyl-[acyl-carrier protein] and L-alanine to produce 8-amino-7-oxononanoate (AON), [acyl-carrier protein], and carbon dioxide. The chain is Putative 8-amino-7-oxononanoate synthase (bioF) from Gloeobacter violaceus (strain ATCC 29082 / PCC 7421).